A 148-amino-acid polypeptide reads, in one-letter code: Snaclec flavocetin-A subunit beta (148 aa).

Positions 1–23 (MGQFIFVSFGFLVVATSLSGTEA) are cleaved as a signal peptide. 3 cysteine pairs are disulfide-bonded: cysteine 27-cysteine 38, cysteine 55-cysteine 144, and cysteine 121-cysteine 136. Residues 34-145 (YDEHCYQVFQ…CSSKRYVVCK (112 aa)) enclose the C-type lectin domain.

It belongs to the snaclec family. Tetramer of heterodimers of alpha and beta subunits (alphabeta)(4); disulfide-linked. As to expression, expressed by the venom gland.

The protein resides in the secreted. Its function is as follows. Strong platelet aggregation inhibitor. Binds specifically to platelet glycoprotein Ibalpha (GP1BA) with high affinity and inhibits vWF-dependent platelet aggregation. Has also been observed to induce small agglutinates in washed platelets by binding to GPIb. This chain is Snaclec flavocetin-A subunit beta, found in Protobothrops flavoviridis (Habu).